The sequence spans 421 residues: UDP-N-acetylglucosamine 1-carboxyvinyltransferase (421 aa).

22–23 (KN) provides a ligand contact to phosphoenolpyruvate. Arginine 92 is a binding site for UDP-N-acetyl-alpha-D-glucosamine. Catalysis depends on cysteine 116, which acts as the Proton donor. Cysteine 116 carries the 2-(S-cysteinyl)pyruvic acid O-phosphothioketal modification. 2 residues coordinate UDP-N-acetyl-alpha-D-glucosamine: aspartate 307 and valine 329.

This sequence belongs to the EPSP synthase family. MurA subfamily.

Its subcellular location is the cytoplasm. The catalysed reaction is phosphoenolpyruvate + UDP-N-acetyl-alpha-D-glucosamine = UDP-N-acetyl-3-O-(1-carboxyvinyl)-alpha-D-glucosamine + phosphate. The protein operates within cell wall biogenesis; peptidoglycan biosynthesis. Cell wall formation. Adds enolpyruvyl to UDP-N-acetylglucosamine. The sequence is that of UDP-N-acetylglucosamine 1-carboxyvinyltransferase from Kosmotoga olearia (strain ATCC BAA-1733 / DSM 21960 / TBF 19.5.1).